A 145-amino-acid polypeptide reads, in one-letter code: 3-dehydroquinate dehydratase (145 aa).

Tyrosine 24 functions as the Proton acceptor in the catalytic mechanism. Residues asparagine 76, histidine 82, and aspartate 89 each coordinate substrate. Histidine 102 functions as the Proton donor in the catalytic mechanism. Substrate is bound by residues 103–104 (LS) and arginine 113.

Belongs to the type-II 3-dehydroquinase family. Homododecamer.

The catalysed reaction is 3-dehydroquinate = 3-dehydroshikimate + H2O. The protein operates within metabolic intermediate biosynthesis; chorismate biosynthesis; chorismate from D-erythrose 4-phosphate and phosphoenolpyruvate: step 3/7. Catalyzes a trans-dehydration via an enolate intermediate. In Nitrosomonas eutropha (strain DSM 101675 / C91 / Nm57), this protein is 3-dehydroquinate dehydratase.